The following is a 201-amino-acid chain: Regulator of G-protein signaling 1 (201 aa).

The 117-residue stretch at 75–191 (SLEKLLVSEE…LKSEIFFRLA (117 aa)) folds into the RGS domain.

It localises to the cell membrane. The protein resides in the cytoplasm. Its subcellular location is the cytosol. In terms of biological role, regulates G protein-coupled receptor signaling cascades, including signaling downstream of the N-formylpeptide chemoattractant receptors and leukotriene receptors. Inhibits B cell chemotaxis. Inhibits signal transduction by increasing the GTPase activity of G protein alpha subunits, thereby driving them into their inactive GDP-bound form. This chain is Regulator of G-protein signaling 1 (rgs1), found in Xenopus laevis (African clawed frog).